The primary structure comprises 471 residues: Tetratricopeptide repeat protein 29 (471 aa).

TPR repeat units lie at residues 92–131 (DKLR…EAAE), 136–173 (YEEV…AQLI), 182–215 (AEAE…TQGR), 234–267 (VRTY…AREG), 274–307 (GEAS…STSL), 314–347 (GRAY…ARNN), and 354–387 (IQAC…AMEV).

The protein resides in the cytoplasm. It is found in the cytoskeleton. It localises to the flagellum axoneme. In terms of biological role, axonemal protein which is implicated in axonemal and/or peri-axonemal structure assembly and regulates flagellum assembly and beating and therefore sperm motility. The sequence is that of Tetratricopeptide repeat protein 29 (Ttc29) from Rattus norvegicus (Rat).